Consider the following 251-residue polypeptide: MKGAEPLAELRLRATFLERPNRFVARVRLEDGREVPVHVASSGRMKELLVPGAPVIVTLQGDASAQPTRPFGGRKTAGRLLMVRTGSTWVSVDTSLPGKLFHQAVVAGSCAPFAGYTEVRPEYRYGGSRIDFLLTAPDLPPCLVEVKSVTSVLPDADGARVARFPDAPTARGARHLDELAGAVREGYRAAVCFITQRDDAQAFGPWDEIDPFFGETLRKVARAGVEIRAFVTHVTPEGAVLGGELPVRLAR.

It belongs to the SfsA family.

The chain is Sugar fermentation stimulation protein homolog from Symbiobacterium thermophilum (strain DSM 24528 / JCM 14929 / IAM 14863 / T).